A 226-amino-acid chain; its full sequence is Pathogenesis-related protein R major form (226 aa).

Residues 1 to 25 (MNFLKSFPFFAFLYFGQYFVAVTHA) form the signal peptide. Intrachain disulfides connect Cys34-Cys225, Cys75-Cys85, Cys90-Cys96, Cys140-Cys214, Cys145-Cys197, Cys153-Cys163, Cys167-Cys176, and Cys177-Cys184.

It belongs to the thaumatin family.

It localises to the vacuole. The sequence is that of Pathogenesis-related protein R major form from Nicotiana tabacum (Common tobacco).